The following is a 203-amino-acid chain: Large ribosomal subunit protein eL15 (203 aa).

Positions 166-203 (ATGKKSRGINKGHRYNNTRSGRRHTWKRQNTQSYWRYR) are disordered. Residues 169-192 (KKSRGINKGHRYNNTRSGRRHTWK) show a composition bias toward basic residues. The segment covering 193 to 203 (RQNTQSYWRYR) has biased composition (polar residues).

It belongs to the eukaryotic ribosomal protein eL15 family.

In Aspergillus niger, this protein is Large ribosomal subunit protein eL15 (rpl15).